Consider the following 124-residue polypeptide: UPF0292 protein AF_0905 (124 aa).

Residues Gly-21–Ile-98 enclose the Toprim domain. The Mg(2+) site is built by Glu-27, Asp-67, and Asp-69.

This sequence belongs to the UPF0292 family. Mg(2+) is required as a cofactor.

In Archaeoglobus fulgidus (strain ATCC 49558 / DSM 4304 / JCM 9628 / NBRC 100126 / VC-16), this protein is UPF0292 protein AF_0905.